The following is a 208-amino-acid chain: Troponin I, cardiac muscle (208 aa).

Disordered stretches follow at residues 1-37 (MAEE…KISA), 54-74 (DLER…GELC), and 168-208 (VRKD…GGQS). Residue A2 is modified to N-acetylalanine. Positions 28–73 (HAKRQSKISASRKLQLKTLLLQRAKRDLEREEQERAGEKQRHLGEL) are involved in binding TNC. Composition is skewed to basic and acidic residues over residues 54–71 (DLER…RHLG) and 168–187 (VRKD…RKNV).

It belongs to the troponin I family. Binds to actin and tropomyosin.

Troponin I is the inhibitory subunit of troponin, the thin filament regulatory complex which confers calcium-sensitivity to striated muscle actomyosin ATPase activity. This Coturnix japonica (Japanese quail) protein is Troponin I, cardiac muscle (TNNI3).